Consider the following 82-residue polypeptide: uncharacterized protein (82 aa).

Positions 55–64 (DQNTAPSTPS) are enriched in polar residues. The segment at 55–82 (DQNTAPSTPSKILPKRLPSQSNLNNNNN) is disordered.

This is an uncharacterized protein from Dictyostelium discoideum (Social amoeba).